Reading from the N-terminus, the 189-residue chain is MKTFAPSYLKHQFLIAMPHMADPNFAHTLTYIVEHNANGAMGLVINRPQELNLADILEQLRPNEQPPASTLQVPIYQGGPVQTDRGFVLHSDECSFQATVALEGLSLTTSQDVLLAIAAGVGPKKSLITLGYAGWEAGQLEAELADNAWLNCPFDPEIIFGLASDQRLGAAAASLGINLSLLTSQAGHA.

This sequence belongs to the UPF0301 (AlgH) family.

The chain is UPF0301 protein PSEEN5058 from Pseudomonas entomophila (strain L48).